The chain runs to 233 residues: MTTVSVQIPAGWPATEERARAVQDELRARVVLDEPGPPPGTGRVTGVDVAYDDERDVVAAAAVVLDAGTLAVVAEATAVGRISFPYVPGLLAFREIPTVLAALEALPCPPGLVVCDGYGLAHPRRFGLASHLGVLTGLPTIGVAKNPFTFTHDDPDTPRGSTSPLLAGAEEVGRAVRTRDGVKPVFVSVGHRVGLGNACAHTLALTPAYRLPETTRRADALCRAALRDAAYRA.

Asp-48 and Asp-116 together coordinate Mg(2+).

This sequence belongs to the endonuclease V family. The cofactor is Mg(2+).

The protein localises to the cytoplasm. The enzyme catalyses Endonucleolytic cleavage at apurinic or apyrimidinic sites to products with a 5'-phosphate.. Functionally, DNA repair enzyme involved in the repair of deaminated bases. Selectively cleaves double-stranded DNA at the second phosphodiester bond 3' to a deoxyinosine leaving behind the intact lesion on the nicked DNA. The polypeptide is Endonuclease V (Streptomyces coelicolor (strain ATCC BAA-471 / A3(2) / M145)).